Here is a 229-residue protein sequence, read N- to C-terminus: Flagellar L-ring protein (229 aa).

The N-terminal stretch at 1 to 23 is a signal peptide; sequence MNPLTRVALAVAAFAALVLALSA. Cys24 carries the N-palmitoyl cysteine lipid modification. Cys24 carries S-diacylglycerol cysteine lipidation.

Belongs to the FlgH family. As to quaternary structure, the basal body constitutes a major portion of the flagellar organelle and consists of four rings (L,P,S, and M) mounted on a central rod.

It localises to the cell outer membrane. Its subcellular location is the bacterial flagellum basal body. Its function is as follows. Assembles around the rod to form the L-ring and probably protects the motor/basal body from shearing forces during rotation. The sequence is that of Flagellar L-ring protein from Anaeromyxobacter dehalogenans (strain 2CP-1 / ATCC BAA-258).